We begin with the raw amino-acid sequence, 569 residues long: Urease subunit alpha (569 aa).

In terms of domain architecture, Urease spans 131 to 569 (GGFDSHIHFI…LPMAQRYFLF (439 aa)). Ni(2+) is bound by residues histidine 136, histidine 138, and lysine 219. Lysine 219 carries the post-translational modification N6-carboxylysine. Position 221 (histidine 221) interacts with substrate. Residues histidine 248 and histidine 274 each coordinate Ni(2+). The active-site Proton donor is the histidine 322. Position 362 (aspartate 362) interacts with Ni(2+).

Belongs to the metallo-dependent hydrolases superfamily. Urease alpha subunit family. Heterotrimer of UreA (gamma), UreB (beta) and UreC (alpha) subunits. Three heterotrimers associate to form the active enzyme. Ni cation is required as a cofactor. Carboxylation allows a single lysine to coordinate two nickel ions.

The protein localises to the cytoplasm. The catalysed reaction is urea + 2 H2O + H(+) = hydrogencarbonate + 2 NH4(+). Its pathway is nitrogen metabolism; urea degradation; CO(2) and NH(3) from urea (urease route): step 1/1. This chain is Urease subunit alpha, found in Roseobacter denitrificans (strain ATCC 33942 / OCh 114) (Erythrobacter sp. (strain OCh 114)).